The following is a 285-amino-acid chain: Bifunctional protein FolD (285 aa).

NADP(+) contacts are provided by residues 165 to 167 and Ser190; that span reads GRS.

Belongs to the tetrahydrofolate dehydrogenase/cyclohydrolase family. In terms of assembly, homodimer.

It catalyses the reaction (6R)-5,10-methylene-5,6,7,8-tetrahydrofolate + NADP(+) = (6R)-5,10-methenyltetrahydrofolate + NADPH. The catalysed reaction is (6R)-5,10-methenyltetrahydrofolate + H2O = (6R)-10-formyltetrahydrofolate + H(+). The protein operates within one-carbon metabolism; tetrahydrofolate interconversion. In terms of biological role, catalyzes the oxidation of 5,10-methylenetetrahydrofolate to 5,10-methenyltetrahydrofolate and then the hydrolysis of 5,10-methenyltetrahydrofolate to 10-formyltetrahydrofolate. This chain is Bifunctional protein FolD, found in Burkholderia mallei (strain NCTC 10247).